We begin with the raw amino-acid sequence, 235 residues long: Pyridoxine 5'-phosphate synthase (235 aa).

Asparagine 6 contributes to the 3-amino-2-oxopropyl phosphate binding site. Residue 8–9 coordinates 1-deoxy-D-xylulose 5-phosphate; the sequence is DH. Arginine 17 lines the 3-amino-2-oxopropyl phosphate pocket. The active-site Proton acceptor is histidine 42. The 1-deoxy-D-xylulose 5-phosphate site is built by arginine 44 and histidine 49. The active-site Proton acceptor is the glutamate 69. Residue threonine 99 coordinates 1-deoxy-D-xylulose 5-phosphate. Histidine 188 functions as the Proton donor in the catalytic mechanism. 3-amino-2-oxopropyl phosphate-binding positions include glycine 189 and 210–211; that span reads GH.

This sequence belongs to the PNP synthase family. As to quaternary structure, homooctamer; tetramer of dimers.

Its subcellular location is the cytoplasm. The catalysed reaction is 3-amino-2-oxopropyl phosphate + 1-deoxy-D-xylulose 5-phosphate = pyridoxine 5'-phosphate + phosphate + 2 H2O + H(+). Its pathway is cofactor biosynthesis; pyridoxine 5'-phosphate biosynthesis; pyridoxine 5'-phosphate from D-erythrose 4-phosphate: step 5/5. Its function is as follows. Catalyzes the complicated ring closure reaction between the two acyclic compounds 1-deoxy-D-xylulose-5-phosphate (DXP) and 3-amino-2-oxopropyl phosphate (1-amino-acetone-3-phosphate or AAP) to form pyridoxine 5'-phosphate (PNP) and inorganic phosphate. The sequence is that of Pyridoxine 5'-phosphate synthase from Wolbachia pipientis subsp. Culex pipiens (strain wPip).